A 723-amino-acid polypeptide reads, in one-letter code: E3 ubiquitin-protein ligase LRSAM1 (723 aa).

LRR repeat units lie at residues 30–51, 56–77, 82–103, 105–127, 128–149, and 151–172; these read ADDI…AFAT, QKKV…SCSL, TIKV…LGQL, ALQV…GNLT, QLQT…VGEL, and SLRT…LAHV. Serine 234 is modified (phosphoserine). Coiled coils occupy residues 254–380 and 510–562; these read SDYE…TESL and ALSS…KPLS. The tract at residues 282–314 is disordered; that stretch reads TQLLQQSSSQKDEILQTVKEEQSRLEQGLSEHQ. The segment covering 291–314 has biased composition (basic and acidic residues); sequence QKDEILQTVKEEQSRLEQGLSEHQ. An SAM domain is found at 569–632; the sequence is GMERQLVALL…LRRVQELLDA (64 aa). A Phosphoserine modification is found at serine 604. The disordered stretch occupies residues 642 to 665; that stretch reads PMGEVVTPTAPQEPPESVRPSAPP. Short sequence motifs (PTAP motif) lie at residues 649-652 and 661-664; these read PTAP and PSAP. Residues 675–710 form an RING-type zinc finger; that stretch reads CVVCLEREAQMIFLNCGHVCCCQQCCQPLRTCPLCR.

Interacts with TSG101. Interacts with PHF23. Interacts with FUS. Post-translationally, ubiquitination promoted by PHF23 leads to proteasomal degradation. In terms of tissue distribution, highly expressed in adult spinal cord motoneurons as well as in fetal spinal cord and muscle tissue.

The protein localises to the cytoplasm. It carries out the reaction S-ubiquitinyl-[E2 ubiquitin-conjugating enzyme]-L-cysteine + [acceptor protein]-L-lysine = [E2 ubiquitin-conjugating enzyme]-L-cysteine + N(6)-ubiquitinyl-[acceptor protein]-L-lysine.. The protein operates within protein modification; protein ubiquitination. Functionally, E3 ubiquitin-protein ligase that mediates monoubiquitination of TSG101 at multiple sites, leading to inactivate the ability of TSG101 to sort endocytic (EGF receptors) and exocytic (HIV-1 viral proteins) cargos. Bacterial recognition protein that defends the cytoplasm from invasive pathogens. Localizes to several intracellular bacterial pathogens and generates the bacteria-associated ubiquitin signal leading to autophagy-mediated intracellular bacteria degradation (xenophagy). This chain is E3 ubiquitin-protein ligase LRSAM1, found in Homo sapiens (Human).